The primary structure comprises 116 residues: MRKTFRIKKPEEFQHVFNKHRSVANKYFIVYQMDKPEQKHFRVGLSVSKKVGKAHERVWVKRRIRQSLLELKPELPQELDLLVIARPAAAHRSQKFLKNQMIHVLKLAKILKEENE.

The protein belongs to the RnpA family. In terms of assembly, consists of a catalytic RNA component (M1 or rnpB) and a protein subunit.

It catalyses the reaction Endonucleolytic cleavage of RNA, removing 5'-extranucleotides from tRNA precursor.. RNaseP catalyzes the removal of the 5'-leader sequence from pre-tRNA to produce the mature 5'-terminus. It can also cleave other RNA substrates such as 4.5S RNA. The protein component plays an auxiliary but essential role in vivo by binding to the 5'-leader sequence and broadening the substrate specificity of the ribozyme. The sequence is that of Ribonuclease P protein component from Leuconostoc mesenteroides subsp. mesenteroides (strain ATCC 8293 / DSM 20343 / BCRC 11652 / CCM 1803 / JCM 6124 / NCDO 523 / NBRC 100496 / NCIMB 8023 / NCTC 12954 / NRRL B-1118 / 37Y).